The chain runs to 871 residues: Translation initiation factor IF-2 (871 aa).

2 disordered regions span residues 60–101 (KKNI…QEVK) and 184–203 (ESLKKKKKEKKSFVASKKES). Residues 61–72 (KNIKTPTAKKPK) are compositionally biased toward basic residues. Basic and acidic residues predominate over residues 73–101 (KENIKEQEKLNESEKKEPKKEEKLKQEVK). Residues 370-537 (TRAPVITIMG…IVLLQADILE (168 aa)) enclose the tr-type G domain. A G1 region spans residues 379-386 (GHVDHGKT). 379 to 386 (GHVDHGKT) provides a ligand contact to GTP. Positions 404–408 (GITQH) are G2. Residues 425–428 (DTPG) form a G3 region. GTP-binding positions include 425–429 (DTPGH) and 479–482 (NKMD). The tract at residues 479–482 (NKMD) is G4. The G5 stretch occupies residues 515–517 (SAK).

The protein belongs to the TRAFAC class translation factor GTPase superfamily. Classic translation factor GTPase family. IF-2 subfamily.

The protein localises to the cytoplasm. One of the essential components for the initiation of protein synthesis. Protects formylmethionyl-tRNA from spontaneous hydrolysis and promotes its binding to the 30S ribosomal subunits. Also involved in the hydrolysis of GTP during the formation of the 70S ribosomal complex. The sequence is that of Translation initiation factor IF-2 from Campylobacter jejuni subsp. jejuni serotype O:6 (strain 81116 / NCTC 11828).